The sequence spans 1407 residues: DNA-directed RNA polymerase subunit beta' (1407 aa).

The Zn(2+) site is built by C70, C72, C85, and C88. D460, D462, and D464 together coordinate Mg(2+). Residues C814, C888, C895, and C898 each coordinate Zn(2+). K972 carries the post-translational modification N6-acetyllysine.

It belongs to the RNA polymerase beta' chain family. In terms of assembly, the RNAP catalytic core consists of 2 alpha, 1 beta, 1 beta' and 1 omega subunit. When a sigma factor is associated with the core the holoenzyme is formed, which can initiate transcription. The cofactor is Mg(2+). It depends on Zn(2+) as a cofactor.

The enzyme catalyses RNA(n) + a ribonucleoside 5'-triphosphate = RNA(n+1) + diphosphate. Functionally, DNA-dependent RNA polymerase catalyzes the transcription of DNA into RNA using the four ribonucleoside triphosphates as substrates. This is DNA-directed RNA polymerase subunit beta' from Shigella sonnei (strain Ss046).